The following is a 226-amino-acid chain: Gap junction beta-2 protein (226 aa).

Over 1–20 the chain is Cytoplasmic; that stretch reads MDWGGLHTILGGVNKHSTSI. A helical transmembrane segment spans residues 21–40; sequence GKIWLTVLFIFRIMILVVAA. The Extracellular portion of the chain corresponds to 41–75; it reads KEVWGDEQADFVCNTLQPGCKNVCYDHYFPISHIR. Cystine bridges form between Cys-53/Cys-180, Cys-60/Cys-174, and Cys-64/Cys-169. Residues 76 to 98 form a helical membrane-spanning segment; it reads LWALQLIFVSTPALLVAMHVAYY. Residues 99–131 are Cytoplasmic-facing; that stretch reads RHEKKRKFIRGEIKTEFKDIEEIKKQKVRIEGS. A helical transmembrane segment spans residues 132-154; that stretch reads LWWTYTGSIFFRVIFEAAFMYVF. The Extracellular segment spans residues 155–192; sequence YVMYDGFAMQRLVKCNAWPCPNTVDCFVSRPTEKTVFT. Residues 193–215 form a helical membrane-spanning segment; that stretch reads VFMIAVSGICILLNVTELCYLLI. The Cytoplasmic segment spans residues 216 to 226; it reads RFCSGKSKKPV.

Belongs to the connexin family. A connexon is composed of a hexamer of connexins. Interacts with CNST.

It is found in the cell membrane. The protein resides in the cell junction. Its subcellular location is the gap junction. Functionally, one gap junction consists of a cluster of closely packed pairs of transmembrane channels, the connexons, through which materials of low MW diffuse from one cell to a neighboring cell. The polypeptide is Gap junction beta-2 protein (GJB2) (Bos taurus (Bovine)).